A 544-amino-acid chain; its full sequence is Chaperonin GroEL 1 (544 aa).

Residues 29–32 (TLGP), K50, 86–90 (DGTTT), G414, and D494 contribute to the ATP site.

This sequence belongs to the chaperonin (HSP60) family. Forms a cylinder of 14 subunits composed of two heptameric rings stacked back-to-back. Interacts with the co-chaperonin GroES.

It is found in the cytoplasm. It catalyses the reaction ATP + H2O + a folded polypeptide = ADP + phosphate + an unfolded polypeptide.. Together with its co-chaperonin GroES, plays an essential role in assisting protein folding. The GroEL-GroES system forms a nano-cage that allows encapsulation of the non-native substrate proteins and provides a physical environment optimized to promote and accelerate protein folding. The sequence is that of Chaperonin GroEL 1 from Psychromonas ingrahamii (strain DSM 17664 / CCUG 51855 / 37).